Reading from the N-terminus, the 151-residue chain is UPF0208 membrane protein YfbV (151 aa).

Helical transmembrane passes span 46–65 (YAIR…QIAL) and 69–91 (LGPA…WWLG).

The protein belongs to the UPF0208 family.

The protein localises to the cell inner membrane. The protein is UPF0208 membrane protein YfbV of Shigella boydii serotype 18 (strain CDC 3083-94 / BS512).